Reading from the N-terminus, the 303-residue chain is Growth/differentiation factor 15 (303 aa).

A signal peptide spans 1–30 (MALRALHAQPTGGPQLRFLLFLLLLLLLLS). Residues 31–188 (WPSQGDALAL…LRSAAGRGRR (158 aa)) constitute a propeptide that is removed on maturation. The N-linked (GlcNAc...) asparagine glycan is linked to N71. Disulfide bonds link C198–C205, C206–C269, C235–C300, and C239–C302.

It belongs to the TGF-beta family. Homodimer; disulfide-linked. Interacts with GFRAL and RET; ligand of GFRAL, which mediates GDF15 internalization and cellular signaling through interaction with RET via the formation of a 2:2:2 ternary complex composed of GDF15, GFRAL and RET. In terms of tissue distribution, detected in plasma (at protein level).

It localises to the secreted. Its function is as follows. Hormone produced in response to various stresses to confer information about those stresses to the brain, and trigger an aversive response, characterized by nausea and/or loss of appetite. The aversive response is both required to reduce continuing exposure to those stresses at the time of exposure and to promote avoidance behavior in the future. Acts by binding to its receptor, GFRAL, activating GFRAL-expressing neurons localized in the area postrema and nucleus tractus solitarius of the brainstem. It then triggers the activation of neurons localized within the parabrachial nucleus and central amygdala, which constitutes part of the 'emergency circuit' that shapes responses to stressful conditions. The GDF15-GFRAL signal induces expression of genes involved in metabolism, such as lipid metabolism in adipose tissues. Contributes to the effect of metformin, an anti-diabetic drug, on appetite reduction and weight loss: produced in the kidney in response to metformin treatment, thereby activating the GDF15-GFRAL response, leading to reduced appetite and weight. Required for avoidance behavior in response to food allergens: induced downstream of mast cell activation to promote aversion and minimize harmful effects of exposure to noxious substances. Produced in response to anticancer drugs, such as camptothecin or cisplatin, promoting nausea and contributing to malnutrition. Overproduced in many cancers, promoting anorexia in cancer (cachexia). Responsible for the risk of nausea during pregnancy: high levels of GDF15 during pregnancy, mostly originating from embryos, are associated with increased nausea. Maternal sensitivity to nausea is probably determined by pre-pregnancy exposure to GDF15, females with naturally high level of GDF15 being less susceptible to nausea than female rats with low levels of GDF15 before pregnancy. Promotes metabolic adaptation in response to systemic inflammation caused by bacterial and viral infections in order to promote tissue tolerance and prevent tissue damage. Required for tissue tolerance in response to myocardial infarction by acting as an inhibitor of leukocyte integring activation, thereby protecting against cardiac rupture. Inhibits growth hormone signaling on hepatocytes. The polypeptide is Growth/differentiation factor 15 (Rattus norvegicus (Rat)).